A 314-amino-acid polypeptide reads, in one-letter code: Olfactory receptor 51G2 (314 aa).

Topologically, residues 1–30 (MTLGSLGNSSSSVSATFLLSGIPGLERMHI) are extracellular. A glycan (N-linked (GlcNAc...) asparagine) is linked at Asn8. A helical membrane pass occupies residues 31–51 (WISIPLCFMYLVSIPGNCTIL). At 52 to 59 (FIIKTERS) the chain is on the cytoplasmic side. Residues 60–80 (LHEPMYLFLSMLALIDLGLSL) form a helical membrane-spanning segment. Topologically, residues 81–104 (CTLPTVLGIFWVGAREISHDACFA) are extracellular. A disulfide bond links Cys102 and Cys194. The helical transmembrane segment at 105 to 125 (QLFFIHCFSFLESSVLLSMAF) threads the bilayer. Residues 126–144 (DRFVAICHPLHYVSILTNT) lie on the Cytoplasmic side of the membrane. Residues 145–165 (VIGRIGLVSLGRSVALIFPLP) form a helical membrane-spanning segment. Topologically, residues 166-201 (FMLKRFPYCGSPVLSHSYCLHQEVMKLACADMKANS) are extracellular. A helical membrane pass occupies residues 202 to 222 (IYGMFVIVSTVGIDSLLILFS). Residues 223 to 242 (YALILRTVLSIASRAERFKA) lie on the Cytoplasmic side of the membrane. The chain crosses the membrane as a helical span at residues 243–263 (LNTCVSHICAVLLFYTPMIGL). Over 264 to 278 (SVIHRFGKQAPHLVQ) the chain is Extracellular. Residues 279–299 (VVMGFMYLLFPPVMNPIVYSV) form a helical membrane-spanning segment. Residues 300 to 314 (KTKQIRDRVTHAFCY) lie on the Cytoplasmic side of the membrane.

This sequence belongs to the G-protein coupled receptor 1 family.

It localises to the cell membrane. Odorant receptor. The protein is Olfactory receptor 51G2 (OR51G2) of Homo sapiens (Human).